We begin with the raw amino-acid sequence, 275 residues long: Formamidopyrimidine-DNA glycosylase (275 aa).

The active-site Schiff-base intermediate with DNA is Pro2. Glu3 (proton donor) is an active-site residue. The active-site Proton donor; for beta-elimination activity is the Lys58. DNA-binding residues include His93, Arg111, and Arg156. The FPG-type zinc-finger motif lies at 241–275 (FVYDRAGLPCRVCGTPIRQIVQGQRSTYFCPTCQR). Residue Arg265 is the Proton donor; for delta-elimination activity of the active site.

This sequence belongs to the FPG family. Monomer. The cofactor is Zn(2+).

It catalyses the reaction Hydrolysis of DNA containing ring-opened 7-methylguanine residues, releasing 2,6-diamino-4-hydroxy-5-(N-methyl)formamidopyrimidine.. The catalysed reaction is 2'-deoxyribonucleotide-(2'-deoxyribose 5'-phosphate)-2'-deoxyribonucleotide-DNA = a 3'-end 2'-deoxyribonucleotide-(2,3-dehydro-2,3-deoxyribose 5'-phosphate)-DNA + a 5'-end 5'-phospho-2'-deoxyribonucleoside-DNA + H(+). In terms of biological role, involved in base excision repair of DNA damaged by oxidation or by mutagenic agents. Acts as a DNA glycosylase that recognizes and removes damaged bases. Has a preference for oxidized purines, such as 7,8-dihydro-8-oxoguanine (8-oxoG). Has AP (apurinic/apyrimidinic) lyase activity and introduces nicks in the DNA strand. Cleaves the DNA backbone by beta-delta elimination to generate a single-strand break at the site of the removed base with both 3'- and 5'-phosphates. The polypeptide is Formamidopyrimidine-DNA glycosylase (Burkholderia ambifaria (strain MC40-6)).